Reading from the N-terminus, the 323-residue chain is Large ribosomal subunit protein uL10 (323 aa).

The disordered stretch occupies residues 298–323; the sequence is AAAAPAAAAEPEEEDDDDDFGMGALF. A compositionally biased stretch (acidic residues) spans 307–317; that stretch reads EPEEEDDDDDF.

Belongs to the universal ribosomal protein uL10 family. As to quaternary structure, P0 forms a pentameric complex by interaction with dimers of P1 and P2. Phosphorylated.

In terms of biological role, ribosomal protein P0 is the functional equivalent of E.coli protein L10. This is Large ribosomal subunit protein uL10 from Trypanosoma cruzi.